We begin with the raw amino-acid sequence, 324 residues long: Clavaminate synthase 1 (324 aa).

Fe cation is bound by residues His-144, Glu-146, and His-279. A 2-oxoglutarate-binding site is contributed by Arg-293.

The protein belongs to the clavaminate synthase family. Requires Fe(2+) as cofactor.

It carries out the reaction deoxyamidinoproclavaminate + 2-oxoglutarate + O2 = amidinoproclavaminate + succinate + CO2. The catalysed reaction is proclavaminate + 2-oxoglutarate + O2 = dihydroclavaminate + succinate + CO2 + H2O. It catalyses the reaction dihydroclavaminate + 2-oxoglutarate + O2 = clavaminate + succinate + CO2 + H2O. Its pathway is antibiotic biosynthesis; clavulanate biosynthesis; clavulanate from D-glyceraldehyde 3-phosphate and L-arginine: step 3/8. The protein operates within antibiotic biosynthesis; clavulanate biosynthesis; clavulanate from D-glyceraldehyde 3-phosphate and L-arginine: step 5/8. It functions in the pathway antibiotic biosynthesis; clavulanate biosynthesis; clavulanate from D-glyceraldehyde 3-phosphate and L-arginine: step 6/8. This chain is Clavaminate synthase 1 (cs1), found in Streptomyces clavuligerus.